Reading from the N-terminus, the 193-residue chain is Xanthine phosphoribosyltransferase (193 aa).

Leucine 20 and asparagine 27 together coordinate xanthine. 129-133 (ANGKA) is a 5-phospho-alpha-D-ribose 1-diphosphate binding site. Lysine 157 lines the xanthine pocket.

The protein belongs to the purine/pyrimidine phosphoribosyltransferase family. Xpt subfamily. As to quaternary structure, homodimer.

Its subcellular location is the cytoplasm. The enzyme catalyses XMP + diphosphate = xanthine + 5-phospho-alpha-D-ribose 1-diphosphate. It participates in purine metabolism; XMP biosynthesis via salvage pathway; XMP from xanthine: step 1/1. Converts the preformed base xanthine, a product of nucleic acid breakdown, to xanthosine 5'-monophosphate (XMP), so it can be reused for RNA or DNA synthesis. This Bifidobacterium animalis subsp. lactis (strain AD011) protein is Xanthine phosphoribosyltransferase.